The primary structure comprises 251 residues: Aliphatic sulfonates import ATP-binding protein SsuB (251 aa).

The 229-residue stretch at 3-231 (VSINEVSKYF…PRNKTSQSFQ (229 aa)) folds into the ABC transporter domain. Residue 39–46 (GPSGCGKS) participates in ATP binding.

The protein belongs to the ABC transporter superfamily. Aliphatic sulfonates importer (TC 3.A.1.17.2) family. In terms of assembly, the complex is composed of two ATP-binding proteins (SsuB), two transmembrane proteins (SsuC) and a solute-binding protein (SsuA).

Its subcellular location is the cell membrane. The enzyme catalyses ATP + H2O + aliphatic sulfonate-[sulfonate-binding protein]Side 1 = ADP + phosphate + aliphatic sulfonateSide 2 + [sulfonate-binding protein]Side 1.. Its function is as follows. Part of the ABC transporter complex SsuABC involved in aliphatic sulfonates import. Responsible for energy coupling to the transport system. The sequence is that of Aliphatic sulfonates import ATP-binding protein SsuB from Bacillus thuringiensis subsp. konkukian (strain 97-27).